A 193-amino-acid polypeptide reads, in one-letter code: GTP cyclohydrolase 1 (193 aa).

Zn(2+) is bound by residues cysteine 83, histidine 86, and cysteine 154.

It belongs to the GTP cyclohydrolase I family. In terms of assembly, homomer.

It catalyses the reaction GTP + H2O = 7,8-dihydroneopterin 3'-triphosphate + formate + H(+). It participates in cofactor biosynthesis; 7,8-dihydroneopterin triphosphate biosynthesis; 7,8-dihydroneopterin triphosphate from GTP: step 1/1. The protein is GTP cyclohydrolase 1 of Porphyromonas gingivalis (strain ATCC 33277 / DSM 20709 / CIP 103683 / JCM 12257 / NCTC 11834 / 2561).